A 179-amino-acid polypeptide reads, in one-letter code: Interleukin-10 (179 aa).

Residues 1–19 (MPSSSALLCCLVFLAGVAA) form the signal peptide. 2 disulfides stabilise this stretch: C31/C127 and C81/C133. The N-linked (GlcNAc...) asparagine glycan is linked to N135.

It belongs to the IL-10 family. Homodimer. Interacts with IL10RA and IL10RB.

The protein localises to the secreted. Its function is as follows. Major immune regulatory cytokine that acts on many cells of the immune system where it has profound anti-inflammatory functions, limiting excessive tissue disruption caused by inflammation. Mechanistically, IL10 binds to its heterotetrameric receptor comprising IL10RA and IL10RB leading to JAK1 and STAT2-mediated phosphorylation of STAT3. In turn, STAT3 translocates to the nucleus where it drives expression of anti-inflammatory mediators. Targets antigen-presenting cells (APCs) such as macrophages and monocytes and inhibits their release of pro-inflammatory cytokines including granulocyte-macrophage colony-stimulating factor /GM-CSF, granulocyte colony-stimulating factor/G-CSF, IL-1 alpha, IL-1 beta, IL-6, IL-8 and TNF-alpha. Also interferes with antigen presentation by reducing the expression of MHC-class II and co-stimulatory molecules, thereby inhibiting their ability to induce T cell activation. In addition, controls the inflammatory response of macrophages by reprogramming essential metabolic pathways including mTOR signaling. The chain is Interleukin-10 (IL10) from Cervus elaphus (Red deer).